Consider the following 388-residue polypeptide: Flavin-dependent monooxygenase (388 aa).

FAD is bound by residues 12–15, 34–36, 44–47, Arg-105, Tyr-267, Asp-289, and 296–302; these read VGVA, EKS, QALD, and PLSGQGN.

The protein belongs to the aromatic-ring hydroxylase family. FAD is required as a cofactor.

It catalyses the reaction a tetracycline + NADPH + O2 + H(+) = a (1S,10aS)-3-(CONH2)-1-(Me2N)-3,3a,4,6-(HO)4-2,5-dioxo-1H,10aH,11H,11aH-cyclopenta[b]anthracene + CO + NADP(+) + H2O. The catalysed reaction is 7-chlorotetracycline + NADPH + O2 + H(+) = (1S,10S,10aS)-3-(CONH2)-9-Cl-1-(Me2N)-3,3a,4,10-(HO)4-10-Me-2,5-dioxo-1H,10aH,11H,11aH-cyclopenta[b]anthracen-6-olate + CO + NADP(+) + H2O. Inhibited by anhydrotetracycline. In terms of biological role, an FAD-requiring monooxygenase active on tetracycline antibiotic and some of its derivatives, which leads to their inactivation. Expression in E.coli confers high resistance to tetracycline and oxytetracycline, does not confer resistance to minocycline or tigecycline. Degrades tetracycline and oxytetracycline; the reaction requires NADPH. Degrades and confers resistance to chlortetracycline. The sequence is that of Flavin-dependent monooxygenase (tet(50)) from Unknown prokaryotic organism.